We begin with the raw amino-acid sequence, 164 residues long: Protein-export protein SecB (164 aa).

This sequence belongs to the SecB family. As to quaternary structure, homotetramer, a dimer of dimers. One homotetramer interacts with 1 SecA dimer.

The protein resides in the cytoplasm. Functionally, one of the proteins required for the normal export of preproteins out of the cell cytoplasm. It is a molecular chaperone that binds to a subset of precursor proteins, maintaining them in a translocation-competent state. It also specifically binds to its receptor SecA. This Rhodopseudomonas palustris (strain BisB18) protein is Protein-export protein SecB.